The sequence spans 250 residues: Transcriptional activator protein EchR (250 aa).

Residues 173 to 238 form the HTH luxR-type domain; it reads KSQEPNIFSQ…HAIRLGVEMN (66 aa). Positions 197 to 216 form a DNA-binding region, H-T-H motif; sequence YQEIALILGITTSTVKFHIG.

This sequence belongs to the autoinducer-regulated transcriptional regulatory protein family.

Its function is as follows. Functions as a potential ohlL-responsive transcriptional regulator. This is Transcriptional activator protein EchR (echR) from Dickeya chrysanthemi (Pectobacterium chrysanthemi).